A 202-amino-acid polypeptide reads, in one-letter code: Large ribosomal subunit protein bL25 (202 aa).

The protein belongs to the bacterial ribosomal protein bL25 family. CTC subfamily. In terms of assembly, part of the 50S ribosomal subunit; part of the 5S rRNA/L5/L18/L25 subcomplex. Contacts the 5S rRNA. Binds to the 5S rRNA independently of L5 and L18.

Functionally, this is one of the proteins that binds to the 5S RNA in the ribosome where it forms part of the central protuberance. This chain is Large ribosomal subunit protein bL25, found in Rickettsia bellii (strain OSU 85-389).